Here is a 339-residue protein sequence, read N- to C-terminus: Adenosine deaminase (339 aa).

Zn(2+) is bound by residues His-15 and His-17. Substrate is bound by residues His-17, Asp-19, and Gly-172. A Zn(2+)-binding site is contributed by His-199. Residue Glu-202 is the Proton donor of the active site. Residue Asp-279 participates in Zn(2+) binding.

This sequence belongs to the metallo-dependent hydrolases superfamily. Adenosine and AMP deaminases family. Adenosine deaminase subfamily. It depends on Zn(2+) as a cofactor.

It catalyses the reaction adenosine + H2O + H(+) = inosine + NH4(+). The catalysed reaction is 2'-deoxyadenosine + H2O + H(+) = 2'-deoxyinosine + NH4(+). Functionally, catalyzes the hydrolytic deamination of adenosine and 2-deoxyadenosine. In Lacticaseibacillus casei (strain BL23) (Lactobacillus casei), this protein is Adenosine deaminase.